The sequence spans 200 residues: NADH-ubiquinone oxidoreductase 21.3 kDa subunit (200 aa).

Helical transmembrane passes span 16-36 (IKSG…MASL), 48-68 (MHVF…GGIY), and 105-125 (FPVI…FAFS).

In terms of assembly, complex I is composed of about 40 different subunits.

It is found in the mitochondrion inner membrane. The catalysed reaction is a ubiquinone + NADH + 5 H(+)(in) = a ubiquinol + NAD(+) + 4 H(+)(out). Functionally, transfer of electrons from NADH to the respiratory chain. The immediate electron acceptor for the enzyme is believed to be ubiquinone. This Neurospora crassa (strain ATCC 24698 / 74-OR23-1A / CBS 708.71 / DSM 1257 / FGSC 987) protein is NADH-ubiquinone oxidoreductase 21.3 kDa subunit.